Here is a 360-residue protein sequence, read N- to C-terminus: Peptide chain release factor 1 (360 aa).

Residue Gln235 is modified to N5-methylglutamine. The interval 285–304 (KRQQEEASTRRNLLGSGDRS) is disordered.

It belongs to the prokaryotic/mitochondrial release factor family. Methylated by PrmC. Methylation increases the termination efficiency of RF1.

The protein resides in the cytoplasm. Its function is as follows. Peptide chain release factor 1 directs the termination of translation in response to the peptide chain termination codons UAG and UAA. In Edwardsiella ictaluri (strain 93-146), this protein is Peptide chain release factor 1.